The chain runs to 80 residues: Styelin-C (80 aa).

A signal peptide spans 1–22 (MQMKATILIVLVALFMIQQSEA). Position 24 is a 6'-bromotryptophan (W24). A Leucine amide modification is found at L53. Residues 55–80 (DMTDEEFQEFMQDIEQAREEELLSRQ) constitute a propeptide, removed in mature form.

The protein resides in the secreted. In terms of biological role, bactericidal against several Gram-positive and Gram-negative bacteria. This Styela clava (Sea squirt) protein is Styelin-C.